The primary structure comprises 90 residues: Small ribosomal subunit protein uS19 (90 aa).

The protein belongs to the universal ribosomal protein uS19 family.

Protein S19 forms a complex with S13 that binds strongly to the 16S ribosomal RNA. This chain is Small ribosomal subunit protein uS19, found in Rhizorhabdus wittichii (strain DSM 6014 / CCUG 31198 / JCM 15750 / NBRC 105917 / EY 4224 / RW1) (Sphingomonas wittichii).